Consider the following 146-residue polypeptide: U-scoloptoxin(16)-Er1a (146 aa).

Positions 1–26 (MNTVSVVQFLAVGCAVFVLYGRGVFA) are cleaved as a signal peptide.

The protein belongs to the scoloptoxin-16 family. In terms of processing, contains 4 disulfide bonds. In terms of tissue distribution, expressed by the venom gland.

Its subcellular location is the secreted. This chain is U-scoloptoxin(16)-Er1a, found in Ethmostigmus rubripes (Giant centipede).